The following is a 94-amino-acid chain: DNA-directed RNA polymerase subunit omega (94 aa).

This sequence belongs to the RNA polymerase subunit omega family. As to quaternary structure, the RNAP catalytic core consists of 2 alpha, 1 beta, 1 beta' and 1 omega subunit. When a sigma factor is associated with the core the holoenzyme is formed, which can initiate transcription.

The catalysed reaction is RNA(n) + a ribonucleoside 5'-triphosphate = RNA(n+1) + diphosphate. Its function is as follows. Promotes RNA polymerase assembly. Latches the N- and C-terminal regions of the beta' subunit thereby facilitating its interaction with the beta and alpha subunits. The polypeptide is DNA-directed RNA polymerase subunit omega (Tolumonas auensis (strain DSM 9187 / NBRC 110442 / TA 4)).